The chain runs to 85 residues: Actobindin homolog (85 aa).

In terms of domain architecture, WH2 spans Asp35 to Ala52.

Functionally, is able to bind two actin monomers at high concentrations of G-actin. This Entamoeba histolytica protein is Actobindin homolog.